We begin with the raw amino-acid sequence, 293 residues long: Movement protein BC1 (293 aa).

This sequence belongs to the begomovirus movement protein BC1 family. As to quaternary structure, binds to dimeric supercoiled plasmid DNA. Post-translationally, phosphorylated.

Its subcellular location is the host cell membrane. It localises to the host microsome membrane. The protein localises to the host endoplasmic reticulum membrane. Transports viral genome to neighboring plant cells directly through plasmosdesmata, without any budding. The movement protein allows efficient cell to cell propagation, by bypassing the host cell wall barrier. Begomovirus genome is shuttled out of nucleus by Nuclear shuttle protein (NSP) and the movement protein transports the DNA-NSP complex to cell plasmodesmata and facilitates further movement across the cell wall. This chain is Movement protein BC1, found in Macroptilium lathyroides (Lima bean).